The chain runs to 103 residues: MEIKTNAKIRVRLESFNHELLTSACRKISDTIQNSDATKLSVVSLPTDKRIYCVLRSPHVDKDSREHFELRVHKRVIEIYYDPTVKCRIISKFRITVRSIISY.

It belongs to the universal ribosomal protein uS10 family. In terms of assembly, part of the 30S ribosomal subunit.

Its subcellular location is the plastid. It localises to the chloroplast. Its function is as follows. Involved in the binding of tRNA to the ribosomes. The polypeptide is Small ribosomal subunit protein uS10c (Trieres chinensis (Marine centric diatom)).